The primary structure comprises 315 residues: Methionyl-tRNA formyltransferase (315 aa).

112–115 (SLLP) is a binding site for (6S)-5,6,7,8-tetrahydrofolate.

It belongs to the Fmt family.

It catalyses the reaction L-methionyl-tRNA(fMet) + (6R)-10-formyltetrahydrofolate = N-formyl-L-methionyl-tRNA(fMet) + (6S)-5,6,7,8-tetrahydrofolate + H(+). Attaches a formyl group to the free amino group of methionyl-tRNA(fMet). The formyl group appears to play a dual role in the initiator identity of N-formylmethionyl-tRNA by promoting its recognition by IF2 and preventing the misappropriation of this tRNA by the elongation apparatus. In Leptospira borgpetersenii serovar Hardjo-bovis (strain JB197), this protein is Methionyl-tRNA formyltransferase.